Consider the following 483-residue polypeptide: Glucose-1-phosphate adenylyltransferase large subunit 3, chloroplastic/amyloplastic (483 aa).

It belongs to the bacterial/plant glucose-1-phosphate adenylyltransferase family. In terms of assembly, heterotetramer. In terms of tissue distribution, tubers.

It is found in the plastid. The protein resides in the chloroplast. It localises to the amyloplast. The enzyme catalyses alpha-D-glucose 1-phosphate + ATP + H(+) = ADP-alpha-D-glucose + diphosphate. It functions in the pathway glycan biosynthesis; starch biosynthesis. With respect to regulation, activated by 3'phosphoglycerate, inhibited by orthophosphate. Allosteric regulation. Functionally, this protein plays a role in synthesis of starch. It catalyzes the synthesis of the activated glycosyl donor, ADP-glucose from Glc-1-P and ATP. This chain is Glucose-1-phosphate adenylyltransferase large subunit 3, chloroplastic/amyloplastic (AGPS3), found in Solanum tuberosum (Potato).